The following is a 289-amino-acid chain: Inorganic pyrophosphatase (289 aa).

An N-acetylserine modification is found at Ser2. An N6-acetyllysine modification is found at Lys57. The Mg(2+) site is built by Asp116, Asp121, and Asp153. An N6-acetyllysine modification is found at Lys228. At Ser250 the chain carries Phosphoserine.

Belongs to the PPase family. Homodimer. It depends on Mg(2+) as a cofactor.

It localises to the cytoplasm. The catalysed reaction is diphosphate + H2O = 2 phosphate + H(+). The chain is Inorganic pyrophosphatase (Ppa1) from Mus musculus (Mouse).